The primary structure comprises 315 residues: Olfactory receptor 2V1 (315 aa).

Residues 1 to 31 (MGRWVNQSYTDGFFLLGIFSHSQTDLVLFSA) are Extracellular-facing. N-linked (GlcNAc...) asparagine glycosylation is present at Asn6. A helical membrane pass occupies residues 32–52 (VMVVFTVALCGNVLLIFLIYL). Residues 53 to 58 (DAGLHT) lie on the Cytoplasmic side of the membrane. The helical transmembrane segment at 59 to 79 (PMYFFLSQLSLMDLMLVCNIV) threads the bilayer. Residues 80–99 (PKMAANFLSGRKSISFVGCG) are Extracellular-facing. The cysteines at positions 98 and 180 are disulfide-linked. A helical membrane pass occupies residues 100–120 (IQIGFFVSLVGSEGLLLGLMA). Over 121–149 (YDRYVAVSHPLHYPILMNQRVCLQITGSS) the chain is Cytoplasmic. A helical membrane pass occupies residues 150–170 (WAFGIIDGVIQMVAAMGLPYC). Residues 171–198 (GSRSVDHFFCEVQALLKLACADTSLFDT) lie on the Extracellular side of the membrane. The chain crosses the membrane as a helical span at residues 199–219 (LLFACCVFMLLLPFSIIMASY). Residues 220 to 238 (ACILGAVLRIRSAQAWKKA) lie on the Cytoplasmic side of the membrane. The chain crosses the membrane as a helical span at residues 239 to 259 (LATCSSHLTAVTLFYGAAMFM). At 260–272 (YLRPRRYRAPSHD) the chain is on the extracellular side. The chain crosses the membrane as a helical span at residues 273–293 (KVASIFYTVLTPMLNPLIYSL). At 294 to 315 (RNGEVMGALRKGLDRCRIGSQH) the chain is on the cytoplasmic side.

This sequence belongs to the G-protein coupled receptor 1 family.

It localises to the cell membrane. Its function is as follows. Odorant receptor. The protein is Olfactory receptor 2V1 (OR2V1) of Homo sapiens (Human).